The chain runs to 560 residues: Long-chain-fatty-acid--CoA ligase (560 aa).

The protein belongs to the ATP-dependent AMP-binding enzyme family.

The catalysed reaction is a long-chain fatty acid + ATP + CoA = a long-chain fatty acyl-CoA + AMP + diphosphate. In Bacillus subtilis (strain 168), this protein is Long-chain-fatty-acid--CoA ligase (lcfA).